Consider the following 55-residue polypeptide: Neurotoxin BmKX-A1-S31 (55 aa).

The signal sequence occupies residues 1-23 (MKIFFAVLVILVLFSMLIWTAYG). 3 cysteine pairs are disulfide-bonded: C30–C45, C36–C50, and C39–C53.

As to expression, expressed by the venom gland.

The protein localises to the secreted. The sequence is that of Neurotoxin BmKX-A1-S31 from Olivierus martensii (Manchurian scorpion).